A 360-amino-acid polypeptide reads, in one-letter code: NAD(P)H-quinone oxidoreductase subunit 1, chloroplastic (360 aa).

9 helical membrane passes run 27 to 47 (IWIF…VLVI), 98 to 118 (FSIG…VIPF), 129 to 149 (IGIF…LMSG), 165 to 185 (AAQS…ISLL), 203 to 223 (FWGW…ISSL), 248 to 268 (YSGI…LISS), 269 to 289 (LFVT…ISIL), 297 to 317 (IFGT…FLFI), and 340 to 360 (FLLP…LFSL).

This sequence belongs to the complex I subunit 1 family. NDH is composed of at least 16 different subunits, 5 of which are encoded in the nucleus.

The protein resides in the plastid. Its subcellular location is the chloroplast thylakoid membrane. The enzyme catalyses a plastoquinone + NADH + (n+1) H(+)(in) = a plastoquinol + NAD(+) + n H(+)(out). It catalyses the reaction a plastoquinone + NADPH + (n+1) H(+)(in) = a plastoquinol + NADP(+) + n H(+)(out). In terms of biological role, NDH shuttles electrons from NAD(P)H:plastoquinone, via FMN and iron-sulfur (Fe-S) centers, to quinones in the photosynthetic chain and possibly in a chloroplast respiratory chain. The immediate electron acceptor for the enzyme in this species is believed to be plastoquinone. Couples the redox reaction to proton translocation, and thus conserves the redox energy in a proton gradient. This is NAD(P)H-quinone oxidoreductase subunit 1, chloroplastic from Lepidium virginicum (Virginia pepperweed).